The primary structure comprises 357 residues: S-adenosyl-L-methionine:benzoic acid/salicylic acid carboxyl methyltransferase 1 (357 aa).

Y18 contributes to the S-adenosyl-L-homocysteine binding site. Q25 lines the benzoate pocket. S-adenosyl-L-homocysteine contacts are provided by C59, N64, D96, L97, S135, and F136. W157 is a benzoate binding site. Positions 168, 254, 256, and 257 each coordinate Mg(2+). Benzoate is bound at residue Q260.

The protein belongs to the methyltransferase superfamily. Type-7 methyltransferase family. In terms of tissue distribution, predominantly expressed in petal limbs and tubes of corollas.

The enzyme catalyses benzoate + S-adenosyl-L-methionine = methyl benzoate + S-adenosyl-L-homocysteine. It catalyses the reaction salicylate + S-adenosyl-L-methionine = methyl salicylate + S-adenosyl-L-homocysteine. It participates in aromatic compound metabolism. Converts benzoic acid into the volatile ester methyl benzoates. This scent, mostly produced in a rhythmical, diurnal manner, attracts the pollinators. This Petunia hybrida (Petunia) protein is S-adenosyl-L-methionine:benzoic acid/salicylic acid carboxyl methyltransferase 1.